Here is a 130-residue protein sequence, read N- to C-terminus: Small ribosomal subunit protein uS8 (130 aa).

It belongs to the universal ribosomal protein uS8 family. In terms of assembly, part of the 30S ribosomal subunit.

Its function is as follows. One of the primary rRNA binding proteins, it binds directly to 16S rRNA central domain where it helps coordinate assembly of the platform of the 30S subunit. This is Small ribosomal subunit protein uS8 from Methanotorris igneus (Methanococcus igneus).